The sequence spans 300 residues: Ornithine carbamoyltransferase (300 aa).

Residues 51–54 (STRT), Gln78, Arg102, and 129–132 (HPCQ) contribute to the carbamoyl phosphate site. L-ornithine-binding positions include Asn160, Asp217, and 221-222 (SM). Residues 257–258 (CL) and Arg285 contribute to the carbamoyl phosphate site.

The protein belongs to the aspartate/ornithine carbamoyltransferase superfamily. OTCase family.

The protein localises to the cytoplasm. The catalysed reaction is carbamoyl phosphate + L-ornithine = L-citrulline + phosphate + H(+). The protein operates within amino-acid biosynthesis; L-arginine biosynthesis; L-arginine from L-ornithine and carbamoyl phosphate: step 1/3. Reversibly catalyzes the transfer of the carbamoyl group from carbamoyl phosphate (CP) to the N(epsilon) atom of ornithine (ORN) to produce L-citrulline. In Halorhodospira halophila (strain DSM 244 / SL1) (Ectothiorhodospira halophila (strain DSM 244 / SL1)), this protein is Ornithine carbamoyltransferase.